Consider the following 45-residue polypeptide: Large ribosomal subunit protein bL34c (45 aa).

The protein belongs to the bacterial ribosomal protein bL34 family.

The protein resides in the plastid. It is found in the chloroplast. The sequence is that of Large ribosomal subunit protein bL34c from Emiliania huxleyi (Coccolithophore).